Reading from the N-terminus, the 446-residue chain is Butyryl-CoA:acetate CoA-transferase (446 aa).

220–224 (GIGGM) provides a ligand contact to CoA. Residue glutamate 245 is the 5-glutamyl coenzyme A thioester intermediate of the active site. 3 residues coordinate CoA: valine 320, glycine 343, and lysine 370.

Belongs to the acetyl-CoA hydrolase/transferase family. Butyryl-CoA CoA-transferase subfamily.

It catalyses the reaction butanoate + acetyl-CoA = butanoyl-CoA + acetate. The catalysed reaction is propanoate + acetyl-CoA = propanoyl-CoA + acetate. It functions in the pathway lipid metabolism; butanoate metabolism. Coenzyme A-transferase that converts butyryl-CoA to butyrate. Can also use proprionyl-CoA as substrate in vitro. The polypeptide is Butyryl-CoA:acetate CoA-transferase (Anaerostipes caccae (strain DSM 14662 / CCUG 47493 / JCM 13470 / NCIMB 13811 / L1-92)).